We begin with the raw amino-acid sequence, 216 residues long: Uracil phosphoribosyltransferase (216 aa).

5-phospho-alpha-D-ribose 1-diphosphate contacts are provided by residues Arg85, Arg110, and 135-143 (DPMVATGYS). Uracil is bound by residues Ile200 and 205–207 (GDA). Asp206 is a binding site for 5-phospho-alpha-D-ribose 1-diphosphate.

Belongs to the UPRTase family. The cofactor is Mg(2+).

The enzyme catalyses UMP + diphosphate = 5-phospho-alpha-D-ribose 1-diphosphate + uracil. Its pathway is pyrimidine metabolism; UMP biosynthesis via salvage pathway; UMP from uracil: step 1/1. Its activity is regulated as follows. Allosterically activated by GTP. In terms of biological role, catalyzes the conversion of uracil and 5-phospho-alpha-D-ribose 1-diphosphate (PRPP) to UMP and diphosphate. The protein is Uracil phosphoribosyltransferase of Burkholderia lata (strain ATCC 17760 / DSM 23089 / LMG 22485 / NCIMB 9086 / R18194 / 383).